Here is a 492-residue protein sequence, read N- to C-terminus: N-succinylglutamate 5-semialdehyde dehydrogenase (492 aa).

220–225 (GSANTG) contributes to the NAD(+) binding site. Catalysis depends on residues Glu-243 and Cys-277.

It belongs to the aldehyde dehydrogenase family. AstD subfamily.

It catalyses the reaction N-succinyl-L-glutamate 5-semialdehyde + NAD(+) + H2O = N-succinyl-L-glutamate + NADH + 2 H(+). Its pathway is amino-acid degradation; L-arginine degradation via AST pathway; L-glutamate and succinate from L-arginine: step 4/5. Functionally, catalyzes the NAD-dependent reduction of succinylglutamate semialdehyde into succinylglutamate. In Escherichia coli (strain K12 / MC4100 / BW2952), this protein is N-succinylglutamate 5-semialdehyde dehydrogenase.